Reading from the N-terminus, the 188-residue chain is Peptide deformylase (188 aa).

Fe cation-binding residues include Cys94 and His136. Residue Glu137 is part of the active site. A Fe cation-binding site is contributed by His140.

This sequence belongs to the polypeptide deformylase family. Fe(2+) serves as cofactor.

It catalyses the reaction N-terminal N-formyl-L-methionyl-[peptide] + H2O = N-terminal L-methionyl-[peptide] + formate. Functionally, removes the formyl group from the N-terminal Met of newly synthesized proteins. Requires at least a dipeptide for an efficient rate of reaction. N-terminal L-methionine is a prerequisite for activity but the enzyme has broad specificity at other positions. The chain is Peptide deformylase from Chlorobium phaeobacteroides (strain DSM 266 / SMG 266 / 2430).